We begin with the raw amino-acid sequence, 472 residues long: Divalent metal cation transporter MntH (472 aa).

A run of 11 helical transmembrane segments spans residues L59 to W79, M92 to A112, L144 to L164, V167 to M187, A196 to A216, V233 to P253, L288 to F308, L325 to A345, V377 to Q397, L402 to L422, and W439 to L459.

The protein belongs to the NRAMP family.

Its subcellular location is the cell inner membrane. H(+)-stimulated, divalent metal cation uptake system. The polypeptide is Divalent metal cation transporter MntH (Xylella fastidiosa (strain Temecula1 / ATCC 700964)).